We begin with the raw amino-acid sequence, 1374 residues long: Serine/threonine-protein kinase LMTK1 (1374 aa).

The chain crosses the membrane as a helical span at residues 32–52; it reads LAVVAVSFSGLFAVIVLMLAC. One can recognise a Protein kinase domain in the interval 125-395; sequence LLYLKEIGRG…PTAEEVHLLL (271 aa). ATP is bound by residues 131–139 and K156; that span reads IGRGWFGKV. The Proton acceptor role is filled by D253. At S495 the chain carries Phosphoserine. Disordered regions lie at residues 542-622, 667-731, 765-1195, 1245-1302, and 1320-1374; these read GHDP…LAEG, VGAR…LLGL, WTET…PAVP, QESP…AWDD, and AAPA…SKEA. Positions 606–620 are enriched in low complexity; the sequence is PSRSPSPSAGPLSLA. Residues 680–690 are compositionally biased toward polar residues; it reads SNVSANNNSGS. Composition is skewed to low complexity over residues 719-731, 801-831, and 847-856; these read PEPGYPGEPLLGL, SPSQEGAPLPSEEASAPDAPDALPDSPTPAT, and SSSSPEVEAP. The span at 865-878 shows a compositional bias: polar residues; sequence EATSGIFTDTSSDG. Over residues 900–914 the composition is skewed to low complexity; sequence PDSLDSLDIPSSASD. A compositionally biased stretch (polar residues) spans 978–987; the sequence is RLSTSLSGLN. S1029 bears the Phosphoserine mark. The span at 1063 to 1073 shows a compositional bias: polar residues; that stretch reads EGSSPEPSTCP. Over residues 1138 to 1155 the composition is skewed to low complexity; that stretch reads TPRAPLRLALPGLPAALE. Over residues 1158 to 1173 the composition is skewed to acidic residues; the sequence is PEEEEEDSEDSDESDE. S1168, S1171, S1184, S1187, and S1262 each carry phosphoserine. Positions 1272 to 1291 are enriched in polar residues; sequence GSPSAPNRPQQADGSPNGST. Positions 1321–1332 are enriched in pro residues; that stretch reads APAPAAPTPTPA. Polar residues predominate over residues 1337–1352; it reads FTVSPAPTSRFSITHV. Positions 1353 to 1363 are enriched in basic and acidic residues; it reads SDSDAESKRGP. Residues 1365 to 1374 show a composition bias toward gly residues; sequence AGAGGESKEA.

This sequence belongs to the protein kinase superfamily. Tyr protein kinase family. Interacts with CDK5. Autophosphorylated. Phosphorylated by CDK5. As to expression, expressed in brain.

It is found in the membrane. The protein resides in the cytoplasm. The protein localises to the perinuclear region. It carries out the reaction L-seryl-[protein] + ATP = O-phospho-L-seryl-[protein] + ADP + H(+). It catalyses the reaction L-threonyl-[protein] + ATP = O-phospho-L-threonyl-[protein] + ADP + H(+). In terms of biological role, may be involved in neuronal differentiation. The polypeptide is Serine/threonine-protein kinase LMTK1 (AATK) (Homo sapiens (Human)).